A 336-amino-acid chain; its full sequence is IgLON family member 5 (336 aa).

The first 30 residues, 1–30 (MPPPAPGARLRLLAAAALAGLAVISRGLLS), serve as a signal peptide directing secretion. Ig-like C2-type domains follow at residues 33 to 122 (LEFS…QPYT), 132 to 213 (PARI…VLVT), and 218 to 307 (PTIT…MRLL). Asn-41, Asn-49, Asn-67, and Asn-137 each carry an N-linked (GlcNAc...) asparagine glycan. A disulfide bridge links Cys-54 with Cys-112. 2 disulfide bridges follow: Cys-154–Cys-195 and Cys-238–Cys-291. Asn-288 carries N-linked (GlcNAc...) asparagine glycosylation.

It belongs to the immunoglobulin superfamily. IgLON family.

The protein resides in the secreted. The protein is IgLON family member 5 (Iglon5) of Mus musculus (Mouse).